The chain runs to 954 residues: Glycine dehydrogenase (decarboxylating) (954 aa).

Residue K706 is modified to N6-(pyridoxal phosphate)lysine.

This sequence belongs to the GcvP family. In terms of assembly, the glycine cleavage system is composed of four proteins: P, T, L and H. It depends on pyridoxal 5'-phosphate as a cofactor.

It catalyses the reaction N(6)-[(R)-lipoyl]-L-lysyl-[glycine-cleavage complex H protein] + glycine + H(+) = N(6)-[(R)-S(8)-aminomethyldihydrolipoyl]-L-lysyl-[glycine-cleavage complex H protein] + CO2. Functionally, the glycine cleavage system catalyzes the degradation of glycine. The P protein binds the alpha-amino group of glycine through its pyridoxal phosphate cofactor; CO(2) is released and the remaining methylamine moiety is then transferred to the lipoamide cofactor of the H protein. The polypeptide is Glycine dehydrogenase (decarboxylating) (Pseudomonas syringae pv. tomato (strain ATCC BAA-871 / DC3000)).